Consider the following 219-residue polypeptide: MDQLEMKKMAAAAALQYVKPDSIIGVGSGSTVNCFIEALGSMRDQIKGAVAASKASEALLAKQGIEVFSANEVSSLDIYVDGADEINPQKMMIKGGGAALTREKIVAALAKKFICIVDTSKQVDVLGSTFALPVEVIPMARSQVARKLVALGGSPEYREGVVTDNGNVILDVYHFAIMNPVEMEKELNNVPGVVTNGIFALRAADIIIVGTPEGAKVIE.

Substrate is bound by residues 28 to 31, 81 to 84, and 94 to 97; these read SGST, DGAD, and KGGG. Glu103 acts as the Proton acceptor in catalysis. Lys121 is a substrate binding site.

The protein belongs to the ribose 5-phosphate isomerase family. In terms of assembly, homodimer.

It carries out the reaction aldehydo-D-ribose 5-phosphate = D-ribulose 5-phosphate. It participates in carbohydrate degradation; pentose phosphate pathway; D-ribose 5-phosphate from D-ribulose 5-phosphate (non-oxidative stage): step 1/1. In terms of biological role, catalyzes the reversible conversion of ribose-5-phosphate to ribulose 5-phosphate. This is Ribose-5-phosphate isomerase A from Pasteurella multocida (strain Pm70).